A 171-amino-acid chain; its full sequence is Endoribonuclease YbeY (171 aa).

Zn(2+) is bound by residues H126, H130, and H136.

This sequence belongs to the endoribonuclease YbeY family. Zn(2+) is required as a cofactor.

It localises to the cytoplasm. Functionally, single strand-specific metallo-endoribonuclease involved in late-stage 70S ribosome quality control and in maturation of the 3' terminus of the 16S rRNA. This chain is Endoribonuclease YbeY, found in Rhizobium leguminosarum bv. trifolii (strain WSM2304).